Consider the following 484-residue polypeptide: Transcription factor MYB88 (484 aa).

The disordered stretch occupies residues 1-20 (MEETTKQNNMKKKKKILLHS). The Nuclear localization signal signature appears at 13 to 20 (KKKILLHS). HTH myb-type domains lie at 25–76 (KKER…YTYL) and 77–131 (NSDF…KKRA). 2 DNA-binding regions (H-T-H motif) span residues 53–76 (WAII…YTYL) and 104–127 (WTEI…TTLC). Disordered regions lie at residues 215 to 241 (NATS…DKSN), 321 to 383 (RSSN…GGEL), and 458 to 484 (GVES…LDSL). The span at 232-241 (KESDGEDKSN) shows a compositional bias: basic and acidic residues. Positions 339-348 (SPASSEYSSG) are enriched in low complexity. The span at 354–380 (TIMTHPSGDKTQQLMSDTQTTSHQQNG) shows a compositional bias: polar residues. Over residues 463 to 476 (SPYPSANPSQPPPC) the composition is skewed to pro residues.

In terms of assembly, interacts with RBR1. In terms of tissue distribution, expressed at low levels in all organs including roots, leaves, hypocotyls stems, flowers, siliques and buds.

The protein resides in the nucleus. Transcription factor that binds to DNA in promoters cis-regulatory element 5'-GGCGCGC-3' of cell cycle genes, including cyclins, cyclin-dependent kinases (CDKs), and components of the pre-replication complex. Binds to DNA in promoters cis-regulatory element 5'-AGCCG-3' of auxin regulated genes (e.g. PIN3 and PIN7). Together with FAMA and MYB124, ensures that stomata contain just two guard cells (GCs) by enforcing a single symmetric precursor cell division before stomatal maturity. Represses the expression of the mitosis-inducing factors CDKB1-1 and CDKA-1, specifically required for the last guard mother cells (GMC) symmetric divisions in the stomatal pathway. Represses CYCA2-3 in newly formed guard cells. Together with MYB88, regulates stomata spacing by restricting divisions late in the stomatal cell lineage thus limiting the number of GMC divisions. In collaboration with CDKB1-1 and CDKB1-2, restrict the G1/S transition and chloroplast and nuclear number during stomatal formation, and normally maintain fate and developmental progression throughout the stomatal cell lineage. Involved in sensing and/or transducing abiotic stress (e.g. drought and salt), probably via the positive regulation of NAC019. Regulates female reproduction being required for entry into megasporogenesis, probably via the regulation of cell cycle genes. Plays a minor role in lateral roots (LRs) initiation. Involved complementarily in establishing the gravitropic set-point angles of lateral roots by regulating the transcription of PIN3 and PIN7 in gravity-sensing cells of primary and lateral roots. The polypeptide is Transcription factor MYB88 (Arabidopsis thaliana (Mouse-ear cress)).